Reading from the N-terminus, the 161-residue chain is Small ribosomal subunit protein uS9 (161 aa).

The span at 1–21 (MATLQSLADLNRANTQTSNPE) shows a compositional bias: polar residues. Residues 1–25 (MATLQSLADLNRANTQTSNPENEAP) are disordered.

It belongs to the universal ribosomal protein uS9 family.

In Methylorubrum populi (strain ATCC BAA-705 / NCIMB 13946 / BJ001) (Methylobacterium populi), this protein is Small ribosomal subunit protein uS9.